A 106-amino-acid chain; its full sequence is 3-phenylpropionate/cinnamic acid dioxygenase ferredoxin subunit (106 aa).

One can recognise a Rieske domain in the interval 4–99; sequence IYACPVADVP…VHVEGGDIFI (96 aa). Residues cysteine 42, histidine 44, cysteine 62, and histidine 65 each contribute to the [2Fe-2S] cluster site.

The protein belongs to the bacterial ring-hydroxylating dioxygenase ferredoxin component family. In terms of assembly, this dioxygenase system consists of four proteins: the two subunits of the hydroxylase component (HcaE and HcaF), a ferredoxin (HcaC) and a ferredoxin reductase (HcaD). The cofactor is [2Fe-2S] cluster.

The protein operates within aromatic compound metabolism; 3-phenylpropanoate degradation. Functionally, part of the multicomponent 3-phenylpropionate dioxygenase, that converts 3-phenylpropionic acid (PP) and cinnamic acid (CI) into 3-phenylpropionate-dihydrodiol (PP-dihydrodiol) and cinnamic acid-dihydrodiol (CI-dihydrodiol), respectively. This protein seems to be a 2Fe-2S ferredoxin. This Shigella flexneri serotype 5b (strain 8401) protein is 3-phenylpropionate/cinnamic acid dioxygenase ferredoxin subunit.